We begin with the raw amino-acid sequence, 535 residues long: Dimethylaniline monooxygenase [N-oxide-forming] 2 (535 aa).

At alanine 2 the chain carries N-acetylalanine. FAD contacts are provided by residues 9–13 (GAGVS), glutamate 32, 40–41 (LW), and 61–62 (NT). Residues 60–61 (TN) and 195–198 (SASD) contribute to the NADP(+) site. A Glycyl lysine isopeptide (Lys-Gly) (interchain with G-Cter in SUMO) cross-link involves residue lysine 492. A helical transmembrane segment spans residues 510-530 (FPVSFLLKFLGLFALVLAFLF).

Belongs to the FMO family. FAD serves as cofactor. Mg(2+) is required as a cofactor. Lung.

The protein resides in the microsome membrane. It localises to the endoplasmic reticulum membrane. The catalysed reaction is N,N-dimethylaniline + NADPH + O2 + H(+) = N,N-dimethylaniline N-oxide + NADP(+) + H2O. In terms of biological role, catalyzes the oxidative metabolism of numerous xenobiotics, including mainly therapeutic drugs and insecticides that contain a soft nucleophile, most commonly nitrogen and sulfur and participates to their bioactivation. Most drug substrates are tertiary amines such as prochlorperazine and trifluoperazine which are N-oxygenated to form the N-oxide, or sulfides such as thiourea and ethionamide, which are S-oxygenated to the sulfoxide. Others include primary alkylamines such as N-dodecylamine and octan-1-amine that are sequentially monooxygenated to oximes through intermediate hydroxylamines and both steps are NADPH- and oxygen-dependent. Also metabolized N-Deacetyl ketoconazole (DAK) to N-hydroxy-DAK and appears to further metabolizes N-hydroxy-DAK to two others metabolites. Also catalyzes S-oxygenation of the thioether-containing organophosphate insecticides, phorate and disulfoton. This Oryctolagus cuniculus (Rabbit) protein is Dimethylaniline monooxygenase [N-oxide-forming] 2.